We begin with the raw amino-acid sequence, 364 residues long: sn-glycerol-3-phosphate import ATP-binding protein UgpC (364 aa).

The ABC transporter domain maps to 4–235 (VVLRNVRKTY…PATTFVASFI (232 aa)). Residue 37–44 (GPSGCGKS) coordinates ATP.

This sequence belongs to the ABC transporter superfamily. sn-glycerol-3-phosphate importer (TC 3.A.1.1.3) family. The complex is composed of two ATP-binding proteins (UgpC), two transmembrane proteins (UgpA and UgpE) and a solute-binding protein (UgpB).

The protein resides in the cell inner membrane. It carries out the reaction sn-glycerol 3-phosphate(out) + ATP + H2O = sn-glycerol 3-phosphate(in) + ADP + phosphate + H(+). Its function is as follows. Part of the ABC transporter complex UgpBAEC involved in sn-glycerol-3-phosphate (G3P) import. Responsible for energy coupling to the transport system. In Rhodopseudomonas palustris (strain BisB5), this protein is sn-glycerol-3-phosphate import ATP-binding protein UgpC.